Consider the following 383-residue polypeptide: Creatine kinase, testis isozyme (383 aa).

The 87-residue stretch at 14–100 (KRLSPEEEFP…LDPIIEDRHG (87 aa)) folds into the Phosphagen kinase N-terminal domain. Positions 99-112 (HGGYKPTDKHKTDL) are enriched in basic and acidic residues. The interval 99-119 (HGGYKPTDKHKTDLNPDNLKG) is disordered. The region spanning 127 to 369 (YVISSRVRTG…KLLVEMEKKL (243 aa)) is the Phosphagen kinase C-terminal domain. ATP contacts are provided by residues 130–134 (SSRVR), histidine 193, arginine 238, arginine 294, 322–327 (RGTGGV), and aspartate 337.

The protein belongs to the ATP:guanido phosphotransferase family. In terms of tissue distribution, exists in many tissues, but preferentially in testis.

It carries out the reaction creatine + ATP = N-phosphocreatine + ADP + H(+). Its function is as follows. Reversibly catalyzes the transfer of phosphate between ATP and various phosphogens (e.g. creatine phosphate). Creatine kinase isoenzymes play a central role in energy transduction in tissues with large, fluctuating energy demands, such as skeletal muscle, heart, brain and spermatozoa. The polypeptide is Creatine kinase, testis isozyme (tck1) (Oncorhynchus mykiss (Rainbow trout)).